The chain runs to 260 residues: MADWQKAHGRLQRDVAGNRTVPYAGADAMTRPRQAQSPLSAADKAAALALTPVSRETEARLDAYVDLLVQWQTKTNLIASSTLPQLWTRHIADSLQLLALAPQAKRWADFGSGGGFPGVVLACALADVEGARIDLVERNAKKAAFLREAVRITGTPGVIHPMDIGDYVDRLDGRIDCVTARALAPLQVLLGFAEPLVKQGAKALLLKGQDVEAELTEATKYWNIEPRLHSSRTGGQGWIVELDRIERRDRPPTKQAWRRA.

S-adenosyl-L-methionine is bound by residues glycine 111, phenylalanine 116, and arginine 181.

The protein belongs to the methyltransferase superfamily. RNA methyltransferase RsmG family.

It is found in the cytoplasm. It catalyses the reaction guanosine(527) in 16S rRNA + S-adenosyl-L-methionine = N(7)-methylguanosine(527) in 16S rRNA + S-adenosyl-L-homocysteine. Functionally, specifically methylates the N7 position of guanine in position 527 of 16S rRNA. The sequence is that of Ribosomal RNA small subunit methyltransferase G from Nitrobacter hamburgensis (strain DSM 10229 / NCIMB 13809 / X14).